The chain runs to 219 residues: Protein Ac132 (219 aa).

The tract at residues 1-34 (MSDKTPTKKGGSHAMTLRERGVTKPPKKSEKLQQ) is disordered. Residues 16-33 (TLRERGVTKPPKKSEKLQ) are compositionally biased toward basic and acidic residues. Positions 103 to 134 (YPMAYFVNTDYKLKLECARIRSDLLYKNKNEV) are NEBU-like domain.

Interacts with viral envelope protein E18 and the DNA-binding protein p6.9.

The protein resides in the host cytoplasm. Its subcellular location is the host nucleus. The protein localises to the virion. Plays an essential role in nucleocapsid entry in host nucleus. May act by binding and stabilizing F-actin in the infected cell, which might attach to nucleocapsids and then push the nucleocapsids into the nucleus. The chain is Protein Ac132 (Ac132) from Autographa californica nuclear polyhedrosis virus (AcMNPV).